We begin with the raw amino-acid sequence, 122 residues long: Large ribosomal subunit protein bL12 (122 aa).

It belongs to the bacterial ribosomal protein bL12 family. Homodimer. Part of the ribosomal stalk of the 50S ribosomal subunit. Forms a multimeric L10(L12)X complex, where L10 forms an elongated spine to which 2 to 4 L12 dimers bind in a sequential fashion. Binds GTP-bound translation factors.

Forms part of the ribosomal stalk which helps the ribosome interact with GTP-bound translation factors. Is thus essential for accurate translation. The polypeptide is Large ribosomal subunit protein bL12 (Staphylococcus haemolyticus (strain JCSC1435)).